Here is a 43-residue protein sequence, read N- to C-terminus: Protein PsbN (43 aa).

The helical transmembrane segment at 5 to 27 (TFLSIFISAALLGITGYSIYTAF) threads the bilayer.

The protein belongs to the PsbN family.

The protein resides in the plastid. Its subcellular location is the cyanelle thylakoid membrane. May play a role in photosystem I and II biogenesis. This chain is Protein PsbN, found in Cyanophora paradoxa.